The sequence spans 236 residues: 1-(5-phosphoribosyl)-5-[(5-phosphoribosylamino)methylideneamino] imidazole-4-carboxamide isomerase (236 aa).

D8 serves as the catalytic Proton acceptor. D127 acts as the Proton donor in catalysis.

The protein belongs to the HisA/HisF family.

Its subcellular location is the cytoplasm. The enzyme catalyses 1-(5-phospho-beta-D-ribosyl)-5-[(5-phospho-beta-D-ribosylamino)methylideneamino]imidazole-4-carboxamide = 5-[(5-phospho-1-deoxy-D-ribulos-1-ylimino)methylamino]-1-(5-phospho-beta-D-ribosyl)imidazole-4-carboxamide. It functions in the pathway amino-acid biosynthesis; L-histidine biosynthesis; L-histidine from 5-phospho-alpha-D-ribose 1-diphosphate: step 4/9. The chain is 1-(5-phosphoribosyl)-5-[(5-phosphoribosylamino)methylideneamino] imidazole-4-carboxamide isomerase from Campylobacter hominis (strain ATCC BAA-381 / DSM 21671 / CCUG 45161 / LMG 19568 / NCTC 13146 / CH001A).